The following is a 537-amino-acid chain: Extracellular exo-inulinase inuE (537 aa).

An N-terminal signal peptide occupies residues 1 to 19 (MARLLKAVTVCALAGIAHA). The active site involves Asp41. Residues Asn49, Asn67, Asn112, Asn300, Asn363, Asn398, Asn430, and Asn531 are each glycosylated (N-linked (GlcNAc...) asparagine).

The protein belongs to the glycosyl hydrolase 32 family.

Its subcellular location is the secreted. The enzyme catalyses Hydrolysis of terminal, non-reducing (2-&gt;1)- and (2-&gt;6)-linked beta-D-fructofuranose residues in fructans.. Its activity is regulated as follows. The catalytic activity is increased by manganese cathions, but strongly inhibited by other metal ions such as copper, aluminum, silver, iron, nickel, zinc and magnesium cathions. In terms of biological role, exo-inulinase involved in utilization of the plant storage polymer inulin, consisting of fructooligosaccharides with a degree of polymerization (DP) value from 2 to 60. Splits off terminal fructose units successively from the non-reducing end of the inulin molecule, and also hydrolyze sucrose and raffinose. In Aspergillus ficuum, this protein is Extracellular exo-inulinase inuE (exoI).